We begin with the raw amino-acid sequence, 501 residues long: TNF receptor-associated factor 2 (501 aa).

Alanine 2 bears the N-acetylalanine mark. Serine 5 bears the Phosphoserine mark. A Phosphothreonine modification is found at threonine 7. Position 11 is a phosphoserine (serine 11). Position 22 is a phosphothreonine (threonine 22). A Glycyl lysine isopeptide (Lys-Gly) (interchain with G-Cter in ubiquitin) cross-link involves residue lysine 31. Residues 34–73 (CSACRNVLRRPFQAQCGHRYCSFCLASILSSGPQNCAACV) form an RING-type zinc finger. Threonine 117 carries the post-translational modification Phosphothreonine; by PKC. 2 consecutive TRAF-type zinc fingers follow at residues 124 to 180 (CHEG…AHHE) and 177 to 233 (AHHE…EKQQ). Residues 283-293 (ENIVCVLNREV) form an important for interaction with BIRC2 and BIRC3 region. The stretch at 299–348 (TAEACSRQHRLDQDKIEALSSKVQQLERSIGLKDLAMADLEQKVLEMEAS) forms a coiled coil. Lysine 320 is covalently cross-linked (Glycyl lysine isopeptide (Lys-Gly) (interchain with G-Cter in ubiquitin)). In terms of domain architecture, MATH spans 351-496 (DGVFIWKISD…DDAIFIKAIV (146 aa)).

This sequence belongs to the TNF receptor-associated factor family. A subfamily. In terms of assembly, homotrimer. Heterotrimer with TRAF1. Heterotrimer with TRAF3 (via TRAF domain). The domain containing the RING-type and the first TRAF-type zinc finger can also form homodimers (in vitro). Interacts with TNFRSF1B/TNFR2. Interacts with TNFRSF5/CD40. Interacts with TNFRSF4, TNFRSF7/CD27, TNFRSF8/CD30, TNFRSF9/CD137, TNFRSF11A/RANK, TNFRSF13B/TACI, TNFRSF14, TNFRSF16/NGFR, TNFRSF17/BCMA, TNFRSF18/AITR, TNFRSF19/TROY, TNFRSF19L/RELT and EDAR. Stimulation of TNF-alpha receptor TNFRSF1A leads to the formation of two distinct signaling complexes. Plasma membrane-bound complex I is composed of TNFRSF1A, TRADD, RIPK1, TRAF2 and BIRC2/c-IAP1 or BIRC3 which interacts with CHUCK/IKK-alpha, IKBKB/IKK-beta and IKBKG/IKK-gamma promoting cell survival. Subsequently, TRADD, RIPK1 and TRAF2 dissociate from TNFRSF1A and form cytoplasmic complex II with FADD and caspase CASP8 promoting cell apoptosis. Interacts with TRADD. Identified in a complex with TNFRSF1A, RIPK1 and IKBKB/IKK-beta. Interacts with RIPK2. Interacts with BIRC2 and BIRC3 N-terminus; a single BIRC2 or BIRC3 molecule interacts with a heterotrimer formed by TRAF1 and TRAF2, or a TRAF2 homotrimer. Identified in a complex composed of TRAF2, TRAF3, BIRC2 and BIRC3. Interacts with BIRC2; the interaction promotes BIRC2 stability. Interaction with BIRC2 and/or BIRC3 is essential for ubiquitination of IKBKE, degradation of NFKBIA and activation of NF-kappa-B. Within complex I, phosphorylated TRAF2 interacts (via 'Lys-63'-linked polyubiquitin chains) with CHUCK/IKK-alpha, IKBKB/IKK-beta, IKBKG/IKK-gamma TAB2, TAB3 and TAK1 in response to TNF-alpha stimulation. Within complex I, interacts with UXT isoform 1 (via TPQE motif); the interaction prevents the recruitment of FADD and CASP8/caspase 8 to complex I. Forms a complex composed of TNFRSF8/CD30 or TNFRSF1B/TNFR2, and TRAF1, TRAF2 and E3 ligase TRAIP. Within the complex, interacts with TRAIP; the interaction inhibits TRAF2-mediated NF-kappa B activation. Component of a complex composed of TANK and TBK1. Interacts with TRPC4AP. Interacts with MAP3K1/MEKK1, MAP3K5/ASK1 and MAP3K11/MLK3 in response to TNF-alpha stimulation; the interaction leads to JNK activation and interaction with MAP3K5 is inhibited by PRMT1. Component of a complex composed of MAP3K14/NIK BIRC3 and TRAF3; the interaction leads to BIRC2/3-mediated ubiquitination of TRAF3 upon CD40 engagement in a TRAF2-dependent manner. Interacts with MAP3K14/NIK in response to TNF-alpha stimulation; the interaction leads to NF-kappa B activation. Interacts with PEG3; the interaction may promote TRAF2-mediated NF-kappa B activation. Interacts with HIVEP3; the interaction may inhibit TNF-alpha-TRAF2-mediated NF-kappa B and JNK activation. Interacts with TANK/ITRAF; the interaction prevents interaction between TNFRSF1B/TNFR2 and TRAF2. Interacts with deubiquitinating enzyme CYLD; the interaction results in the deubiquitination and inactivation of TRAF2. Interacts with SIAH2; the interaction leads to TRAF2 ubiquitination and degradation. Interacts with E2 conjugating enzyme UBE2N/Ubc13, E3 ligase ITCH and RNF11 in response to TNF-alpha stimulation. Interacts with ubiquitin-editing enzyme TNFAIP3/A20 in response to TNF-alpha stimulation; the interaction promotes TRAF2 dissociation from UBE2N/Ubc13, ITCH, RNF11 and TAX1BP1 and prevents prolonged TRAF-2 ubiquitination. Interacts with TAX1BP1 in response to TNF-alpha stimulation; the interaction promotes TRAF2 dissociation from UBE2N/Ubc13 and TNFAIP3/A20, and prevents prolonged TRAF-2 ubiquitination. Interacts (via C-terminus) with EIF2AK2/PKR (via the kinase catalytic domain). Interacts with deubiquitinating enzyme USP48. Interacts with PTPN2; probably involved in TNF-mediated signaling. Interacts with Toll-like receptor TLR4/3 adapter TICAM1/TRIF; the interaction may promote TICAM1 ubiquitination. Interacts with kinase/endoribonuclease ERN1/IRE1 and DAB2IP in response to ER stress; the interaction requires DAB2IP. Interacts with ERN1/IRE1 and TAOK3 in response to ER stress; the interaction may promote TRAF2 phosphorylation. Interacts (via zinc fingers) with DAB2IP (via C-terminus PER domain)in response to TNF-alpha stimulation. Interacts with CASP8AP2/FLASH. Interacts with NFATC2IP; the interaction may repress IL-4 production in T cells. Interacts with kinase CDK9. Interacts with sphingosine kinase 1 SPHK1. Interacts with kinase TNIK. Interacts with TRAFD1. Interacts with DNA phosphodiesterase TDP2. Interacts with MAVS/IPS1. Interacts with CARD14. Interacts with Epstein-Barr virus LMP1/BNFL1. Interacts with GPS2. Interacts with XPNPEP3. Interacts with RIPK3. Interacts with RELL2. Interacts with LRRC19. Interacts with GAPDH; promoting TRAF2 ubiquitination. Phosphorylated at several serine residues within the first 128 amino acid residues. Phosphorylated at Thr-117 in response to signaling via TNF and TNFRSF1A. Phosphorylation at Thr-117 is required for 'Lys-63'-linked polyubiquitination, but not for 'Lys-48'-linked polyubiquitination. Phosphorylation at Thr-117 is important for interaction with IKKA and IKKB, activation of IKK and subsequent activation of NF-kappa-B. In terms of processing, undergoes both 'Lys-48'-linked and 'Lys-63'-linked polyubiquitination. Polyubiquitinated via 'Lys-63'-linked ubiquitin in response to TNF signaling; this requires prior phosphorylation at Thr-117. 'Lys-63'-linked polyubiquitination promotes TRAF2-mediated activation of NF-kappa-B. Can be polyubiquitinated at several Lys residues via 'Lys-48'-linked ubiquitin chains in response to TNF signaling, leading to proteasomal degradation. Autoubiquitinated, leading to its subsequent proteasomal degradation. Polyubiquitinated by BIRC2 and SIAH2, leading to its subsequent proteasomal degradation. Deubiquitinated by CYLD, a protease that specifically cleaves 'Lys-63'-linked polyubiquitin chains. Ubiquination is inhibited by LRRC19; inhibits proteasomal degradation. Ubiquitinated at Lys-320 by the SCF(FBXL2) complex, leading to its degradation by the proteasome. Ubiquitinated by E3 ubiquitin-protein ligase complex containing FBXO7; leading to repression of NF-kappa-B signaling.

It localises to the cytoplasm. The catalysed reaction is S-ubiquitinyl-[E2 ubiquitin-conjugating enzyme]-L-cysteine + [acceptor protein]-L-lysine = [E2 ubiquitin-conjugating enzyme]-L-cysteine + N(6)-ubiquitinyl-[acceptor protein]-L-lysine.. It functions in the pathway protein modification; protein ubiquitination. Has very low E3 ubiquitin ligase activity in the absence of sphingosine-1-phosphate. E3 ubiquitin ligase activity is strongly activated by cytoplasmic sphingosine-1-phosphate. E3 ubiquitin-protein ligase that regulates activation of NF-kappa-B and JNK and plays a central role in the regulation of cell survival and apoptosis. Catalyzes 'Lys-63'-linked ubiquitination of target proteins, such as BIRC3, IKBKE, MLST8, RIPK1 and TICAM1. Is an essential constituent of several E3 ubiquitin-protein ligase complexes, where it promotes the ubiquitination of target proteins by bringing them into contact with other E3 ubiquitin ligases. Regulates BIRC2 and BIRC3 protein levels by inhibiting their autoubiquitination and subsequent degradation; this does not depend on the TRAF2 RING-type zinc finger domain. Plays a role in mediating activation of NF-kappa-B by EIF2AK2/PKR. In complex with BIRC2 or BIRC3, promotes ubiquitination of IKBKE. Acts as a regulator of mTORC1 and mTORC2 assembly by mediating 'Lys-63'-linked ubiquitination of MLST8, thereby inhibiting formation of the mTORC2 complex, while facilitating assembly of the mTORC1 complex. Required for normal antibody isotype switching from IgM to IgG. This is TNF receptor-associated factor 2 from Homo sapiens (Human).